The sequence spans 368 residues: Glycine betaine monooxygenase reductase subunit (368 aa).

In terms of domain architecture, FAD-binding FR-type spans 16–119 (NGRHNVRCVK…HGPVGDFNVI (104 aa)). Positions 284–368 (LQVEFSNSGK…TPKSHVAIEF (85 aa)) constitute a 2Fe-2S ferredoxin-type domain. Residues cysteine 318, cysteine 323, cysteine 326, and cysteine 356 each contribute to the [2Fe-2S] cluster site.

In the N-terminal section; belongs to the FAD-binding oxidoreductase type 6 family. In terms of assembly, monomer. The system is composed of an oxygenase subunit (BmoA) and a reductase subunit (BmoB). Maximal specific activity is obtained when the ratio of BmoA to BmoB is 5:1. FAD is required as a cofactor. The cofactor is [2Fe-2S] cluster.

It carries out the reaction glycine betaine + NADH + O2 + H(+) = N,N-dimethylglycine + formaldehyde + NAD(+) + H2O. In terms of biological role, involved in degradation of glycine betaine. Part of a Rieske-type oxygenase system that catalyzes the conversion of glycine betaine (GB) to dimethylglycine (DMG). This subunit is the ferredoxin reductase component of the system. NADH is the preferred electron donor. The chain is Glycine betaine monooxygenase reductase subunit from Chromohalobacter salexigens (strain ATCC BAA-138 / DSM 3043 / CIP 106854 / NCIMB 13768 / 1H11).